Consider the following 194-residue polypeptide: Imidazoleglycerol-phosphate dehydratase (194 aa).

Belongs to the imidazoleglycerol-phosphate dehydratase family.

It localises to the cytoplasm. It carries out the reaction D-erythro-1-(imidazol-4-yl)glycerol 3-phosphate = 3-(imidazol-4-yl)-2-oxopropyl phosphate + H2O. The protein operates within amino-acid biosynthesis; L-histidine biosynthesis; L-histidine from 5-phospho-alpha-D-ribose 1-diphosphate: step 6/9. The chain is Imidazoleglycerol-phosphate dehydratase from Bacillus thuringiensis (strain Al Hakam).